Here is a 522-residue protein sequence, read N- to C-terminus: Signal transduction histidine-protein kinase/phosphatase MprB (522 aa).

The Cytoplasmic segment spans residues methionine 1 to leucine 30. The helical transmembrane segment at leucine 31–isoleucine 51 threads the bilayer. The Extracellular portion of the chain corresponds to serine 52 to arginine 167. The chain crosses the membrane as a helical span at residues tryptophan 168–valine 188. The Cytoplasmic portion of the chain corresponds to threonine 189–arginine 522. The HAMP domain maps to arginine 190–glutamate 242. In terms of domain architecture, Histidine kinase spans aspartate 250–proline 470. Histidine 253 carries the post-translational modification Phosphohistidine; by autocatalysis. The interval glycine 468–arginine 522 is disordered. Residues threonine 502–arginine 522 are compositionally biased toward polar residues.

Mg(2+) is required as a cofactor. The cofactor is Mn(2+). Autophosphorylated.

The protein resides in the cell membrane. The enzyme catalyses ATP + protein L-histidine = ADP + protein N-phospho-L-histidine.. In terms of biological role, member of the two-component regulatory system MprB/MprA which contributes to maintaining a balance among several systems involved in stress resistance and is required for establishment and maintenance of persistent infection in the host. In response to environmental signals MprB acts both as a membrane-associated protein kinase that undergoes autophosphorylation and subsequently transfers the phosphate to MprA, and a protein phosphatase that dephosphorylates phospho-MprA. This chain is Signal transduction histidine-protein kinase/phosphatase MprB (mprB), found in Mycobacterium avium (strain 104).